The following is a 435-amino-acid chain: Serine hydroxymethyltransferase 2 (435 aa).

(6S)-5,6,7,8-tetrahydrofolate-binding positions include leucine 135 and 139 to 141 (GHL). N6-(pyridoxal phosphate)lysine is present on lysine 244. Glutamate 260 is a binding site for (6S)-5,6,7,8-tetrahydrofolate.

The protein belongs to the SHMT family. In terms of assembly, homodimer. Requires pyridoxal 5'-phosphate as cofactor.

The protein localises to the cytoplasm. It carries out the reaction (6R)-5,10-methylene-5,6,7,8-tetrahydrofolate + glycine + H2O = (6S)-5,6,7,8-tetrahydrofolate + L-serine. It participates in one-carbon metabolism; tetrahydrofolate interconversion. The protein operates within amino-acid biosynthesis; glycine biosynthesis; glycine from L-serine: step 1/1. Functionally, catalyzes the reversible interconversion of serine and glycine with tetrahydrofolate (THF) serving as the one-carbon carrier. This reaction serves as the major source of one-carbon groups required for the biosynthesis of purines, thymidylate, methionine, and other important biomolecules. Also exhibits THF-independent aldolase activity toward beta-hydroxyamino acids, producing glycine and aldehydes, via a retro-aldol mechanism. This chain is Serine hydroxymethyltransferase 2, found in Vibrio cholerae serotype O1 (strain ATCC 39315 / El Tor Inaba N16961).